The following is a 433-amino-acid chain: Mitochondrial inner membrane protein OXA1L (433 aa).

The Mitochondrial intermembrane segment spans residues 1–108; the sequence is MARNLVCGRW…QCATEPSFTE (108 aa). A helical transmembrane segment spans residues 109-129; that stretch reads LGLGSYTPVGLIQNLLEYIHV. The Mitochondrial matrix portion of the chain corresponds to 130–134; that stretch reads DLGLP. Residues 135–155 traverse the membrane as a helical segment; sequence WWGAIATCTVLARCLVFPLIV. The Mitochondrial intermembrane portion of the chain corresponds to 156–207; it reads KGQREAAKIHNHMPEMQKFSARIREAKLAGDQAEFYKATIEMTRYQKKHDIK. The chain crosses the membrane as a helical span at residues 208–228; sequence LLRPLILPLTQAPVFISFFIA. Residues 229-255 lie on the Mitochondrial matrix side of the membrane; it reads LREMANLPVPSLQTGGLWWFQDLTVSD. A helical membrane pass occupies residues 256 to 276; sequence PIYVLPLVVTATMWCVLELGA. Topologically, residues 277–293 are mitochondrial intermembrane; the sequence is ETGVQSNDLQFMRNIIR. The helical transmembrane segment at 294–314 threads the bilayer; it reads VMPLVVLPVTIHFPSAVFMYW. Over 315 to 433 the chain is Mitochondrial matrix; that stretch reads LSSNVFSLCQ…AKKPWQDTLG (119 aa). Phosphoserine is present on S359. Phosphothreonine is present on residues T395 and T397. The segment at 397–433 is disordered; it reads THNPLLQHDPSHPPKAPNSNNSSIKANAKKPWQDTLG. Low complexity predominate over residues 413–426; it reads PNSNNSSIKANAKK.

The protein belongs to the OXA1/ALB3/YidC family. In terms of assembly, monomer; predominantly monomeric at low salt concentrations. Homooligomer; predominantly homooligomeric at high salt concentrations. Associates with the mitochondrial ribosome. Associates preferentially as a dimer with the large ribosomal subunit 39S of the mitochondrial ribosome. Interacts with OXA1L; promoting cotranslational quality control in mitochondria.

It localises to the mitochondrion inner membrane. Mitochondrial membrane insertase that mediates the cotranslational insertion of integral membrane proteins into the mitochondrial inner membrane. Essential for the activity and assembly of cytochrome oxidase. Required for the correct biogenesis of ATP synthase and complex I in mitochondria. The sequence is that of Mitochondrial inner membrane protein OXA1L (Oxa1l) from Mus musculus (Mouse).